Consider the following 1260-residue polypeptide: Agglutinin-like protein 1 (1260 aa).

Positions 1–17 (MLQQFTLLFLYLSIASA) are cleaved as a signal peptide. 4 disulfide bridges follow: Cys-73–Cys-150, Cys-96–Cys-112, Cys-205–Cys-298, and Cys-227–Cys-256. Repeat copies occupy residues 433–468 (SPNP…IIRE), 469–504 (PPNH…IIRE), 505–540 (PPNP…IIRE), 541–576 (PPNP…IIRE), 577–612 (PPNH…IIRE), 613–648 (PPNH…IIRE), 649–684 (PPNP…LIRE), 685–720 (PPNH…LIRE), 721–756 (PPNH…IIRE), and 757–792 (PPNP…IIYE). The segment at 433-792 (SPNPTVSTTE…GGTDTVIIYE (360 aa)) is 10 X 36 AA tandem repeats. Asn-471 is a glycosylation site (N-linked (GlcNAc...) asparagine). 2 N-linked (GlcNAc...) asparagine glycosylation sites follow: Asn-579 and Asn-615. N-linked (GlcNAc...) asparagine glycosylation is found at Asn-687 and Asn-723. Asn-820, Asn-886, Asn-918, and Asn-973 each carry an N-linked (GlcNAc...) asparagine glycan. Composition is skewed to polar residues over residues 896 to 918 (PTAS…SSDN) and 964 to 979 (KVTF…GTHD). 2 disordered regions span residues 896-924 (PTAS…KSGV) and 954-1226 (SIPS…SSSP). Positions 980 to 995 (SQSTSTEIEIVTTSST) are enriched in low complexity. One copy of the 2-1 repeat lies at 983 to 1043 (TSTEIEIVTT…TTSQPTGDNG (61 aa)). The segment at 983 to 1152 (TSTEIEIVTT…ATTQATNENG (170 aa)) is 2 X 26 AA approximate repeats. The segment covering 1002-1062 (VSSNTDLTSE…PTVATSTLAS (61 aa)) has biased composition (polar residues). N-linked (GlcNAc...) asparagine glycans are attached at residues Asn-1045 and Asn-1068. A compositionally biased stretch (polar residues) spans 1073–1090 (HESASTSLKPSMGENSGL). Residues 1091 to 1110 (TTSTEIEATTTSPTEAPSPA) are compositionally biased toward low complexity. A 2-2 repeat occupies 1092–1152 (TSTEIEATTT…ATTQATNENG (61 aa)). A compositionally biased stretch (polar residues) spans 1111–1154 (VSSGTDVTTEPTDTREQPTTLSTTSKTNSESVATTQATNENGGK). Low complexity-rich tracts occupy residues 1155–1176 (SPST…SANS) and 1197–1226 (SHST…SSSP).

Belongs to the ALS family. In terms of processing, N-glycosylated and O-glycosylated. The GPI-anchor is attached to the protein in the endoplasmic reticulum and serves to target the protein to the cell surface. There, the glucosamine-inositol phospholipid moiety is cleaved off and the GPI-modified mannoprotein is covalently attached via its lipidless GPI glycan remnant to the 1,6-beta-glucan of the outer cell wall layer.

Its subcellular location is the cell membrane. It localises to the secreted. The protein resides in the cell wall. Its function is as follows. Major cell surface adhesion protein which mediates both yeast-to-host tissue adherence and yeast aggregation. Acts as a downstream effector of the EFG1 regulatory pathway. Required for rapamycin-induced aggregation of C.albicans. Binds glycans and mediates adherence to endothelial and epithelial cells, thereby playing an important role in the pathogenesis of C.albicans infections. The polypeptide is Agglutinin-like protein 1 (ALS1) (Candida albicans (Yeast)).